A 77-amino-acid polypeptide reads, in one-letter code: Large ribosomal subunit protein bL28 (77 aa).

It belongs to the bacterial ribosomal protein bL28 family.

This chain is Large ribosomal subunit protein bL28, found in Delftia acidovorans (strain DSM 14801 / SPH-1).